The primary structure comprises 379 residues: Lipid-A-disaccharide synthase (379 aa).

This sequence belongs to the LpxB family.

The catalysed reaction is a lipid X + a UDP-2-N,3-O-bis[(3R)-3-hydroxyacyl]-alpha-D-glucosamine = a lipid A disaccharide + UDP + H(+). Its pathway is bacterial outer membrane biogenesis; LPS lipid A biosynthesis. Functionally, condensation of UDP-2,3-diacylglucosamine and 2,3-diacylglucosamine-1-phosphate to form lipid A disaccharide, a precursor of lipid A, a phosphorylated glycolipid that anchors the lipopolysaccharide to the outer membrane of the cell. In Idiomarina loihiensis (strain ATCC BAA-735 / DSM 15497 / L2-TR), this protein is Lipid-A-disaccharide synthase.